Here is a 177-residue protein sequence, read N- to C-terminus: Large ribosomal subunit protein uL6 (177 aa).

This sequence belongs to the universal ribosomal protein uL6 family. In terms of assembly, part of the 50S ribosomal subunit.

This protein binds to the 23S rRNA, and is important in its secondary structure. It is located near the subunit interface in the base of the L7/L12 stalk, and near the tRNA binding site of the peptidyltransferase center. This Magnetococcus marinus (strain ATCC BAA-1437 / JCM 17883 / MC-1) protein is Large ribosomal subunit protein uL6.